A 352-amino-acid polypeptide reads, in one-letter code: Cyclin-dependent kinase-like 1 (352 aa).

Positions 4–287 constitute a Protein kinase domain; the sequence is YEKIGKIGEG…CEQLLQHPYF (284 aa). Residues 10–18 and K33 each bind ATP; that span reads IGEGSYGVV. The [NKR]KIAxRE motif lies at 45 to 51; that stretch reads KKIALRE. The Proton acceptor role is filled by D126.

This sequence belongs to the protein kinase superfamily. CMGC Ser/Thr protein kinase family. CDC2/CDKX subfamily.

It is found in the cytoplasm. Its subcellular location is the nucleus. It carries out the reaction L-seryl-[protein] + ATP = O-phospho-L-seryl-[protein] + ADP + H(+). It catalyses the reaction L-threonyl-[protein] + ATP = O-phospho-L-threonyl-[protein] + ADP + H(+). This chain is Cyclin-dependent kinase-like 1, found in Rattus norvegicus (Rat).